A 146-amino-acid polypeptide reads, in one-letter code: Universal stress protein MTH_1154 (146 aa).

It belongs to the universal stress protein A family.

The chain is Universal stress protein MTH_1154 from Methanothermobacter thermautotrophicus (strain ATCC 29096 / DSM 1053 / JCM 10044 / NBRC 100330 / Delta H) (Methanobacterium thermoautotrophicum).